The sequence spans 240 residues: DNA repair protein RecO (240 aa).

It belongs to the RecO family.

Functionally, involved in DNA repair and RecF pathway recombination. In Xanthomonas oryzae pv. oryzae (strain MAFF 311018), this protein is DNA repair protein RecO.